A 423-amino-acid chain; its full sequence is Keratin, type I cytoskeletal 18 (423 aa).

An N-acetylserine modification is found at Ser-2. Residues 2–71 are head; it reads SFTTRSTTFS…GLAGMGGVQT (70 aa). A phosphoserine mark is found at Ser-7, Ser-11, Ser-16, and Ser-19. Phosphoserine; alternate occurs at positions 31 and 32. Ser-31 and Ser-32 each carry an O-linked (GlcNAc) serine; alternate glycan. Residue Ser-35 is modified to Phosphoserine. Tyr-37 carries the post-translational modification Phosphotyrosine. Ser-43 bears the Phosphoserine mark. The residue at position 46 (Arg-46) is an Omega-N-methylarginine. Ser-50 is modified (phosphoserine; alternate). O-linked (GlcNAc) serine; alternate glycosylation is present at Ser-50. Ser-52 is subject to Phosphoserine; by MAPKAPK2 and MAPKAPK3. A phosphoserine mark is found at Ser-57 and Ser-60. A necessary for interaction with PNN region spans residues 62-366; it reads GLAGMGGVQT…EALLNIKVKL (305 aa). Positions 69–121 are interaction with TRADD; it reads VQTEKETMQDLNDRLASYLDKVKNLETENRRLESKIREYLEKRGPQGVRDWGH. The coil 1A stretch occupies residues 72 to 107; it reads EKETMQDLNDRLASYLDKVKNLETENRRLESKIREY. The 313-residue stretch at 72 to 384 folds into the IF rod domain; it reads EKETMQDLND…RLLEDGDDFS (313 aa). Lys-73 participates in a covalent cross-link: Glycyl lysine isopeptide (Lys-Gly) (interchain with G-Cter in SUMO2). Ser-85 carries the post-translational modification Phosphoserine. Positions 108 to 125 are linker 1; that stretch reads LEKRGPQGVRDWGHYFKT. Lys-124 carries the post-translational modification N6-acetyllysine. Residues 126–217 form a coil 1B region; it reads IEDLRAQIFA…KNHEEEVQGL (92 aa). 2 positions are modified to phosphoserine: Ser-137 and Ser-170. Positions 218–241 are linker 12; the sequence is EAQIASSGLTVEVDAPKSQDLSKI. Positions 236-384 are interaction with DNAJB6; that stretch reads QDLSKIMADI…RLLEDGDDFS (149 aa). Lys-240 is covalently cross-linked (Glycyl lysine isopeptide (Lys-Gly) (interchain with G-Cter in SUMO2)). The segment at 242 to 380 is coil 2; sequence MADIRAQYEQ…ATYRRLLEDG (139 aa). Position 295 is a phosphothreonine (Thr-295). Glycyl lysine isopeptide (Lys-Gly) (interchain with G-Cter in SUMO2) cross-links involve residues Lys-363 and Lys-365. The interval 381 to 423 is tail; the sequence is DDFSLNDALDSSNSMQTVQRTTTRKVVDGKVVSETNDTRVLRH. Phosphoserine is present on residues Ser-384, Ser-391, Ser-392, and Ser-394. Residue Thr-397 is modified to Phosphothreonine. Lys-410 participates in a covalent cross-link: Glycyl lysine isopeptide (Lys-Gly) (interchain with G-Cter in SUMO2).

The protein belongs to the intermediate filament family. Heterotetramer of two type I and two type II keratins. KRT18 associates with KRT8. Interacts with PNN and mutated CFTR. Interacts with YWHAE, YWHAH and YWHAZ only when phosphorylated. Interacts with DNAJB6, TCHP and TRADD. Interacts with the thrombin-antithrombin complex. Interacts with FAM83H. Interacts with EPPK1. Interacts with PKP1 and PKP2. Post-translationally, phosphorylation increases by IL-6. Proteolytically cleaved by caspases during epithelial cell apoptosis. Cleavage occurs at Asp-231 by either caspase-3, caspase-6 or caspase-7. In terms of processing, dephosphorylated by ethanol. Post-translationally, O-GlcNAcylation increases solubility, and decreases stability by inducing proteasomal degradation. As to expression, expressed on the plasma membrane of hepatocytes and in the narrow apical portions of supporting cells in the vomeronasal sensory epithelium. Detected in the type III alveolar cells of the lung, in the proliferative crypt epithelium of the small intestine and in the older intragemmal cells of the tongue.

Its subcellular location is the nucleus matrix. The protein resides in the cytoplasm. It is found in the perinuclear region. It localises to the nucleus. The protein localises to the nucleolus. In terms of biological role, when phosphorylated, plays a role in filament reorganization. Involved in the delivery of mutated CFTR to the plasma membrane. Together with KRT8, is involved in interleukin-6 (IL-6)-mediated barrier protection. Involved in the uptake of thrombin-antithrombin complexes by hepatic cells. The polypeptide is Keratin, type I cytoskeletal 18 (Rattus norvegicus (Rat)).